The following is a 197-amino-acid chain: Guanylate kinase (197 aa).

Positions 6 to 191 (SKLIILSGPS…CVAQIEKIIS (186 aa)) constitute a Guanylate kinase-like domain. An ATP-binding site is contributed by 13 to 20 (GPSGVGKG).

This sequence belongs to the guanylate kinase family.

The protein resides in the cytoplasm. It carries out the reaction GMP + ATP = GDP + ADP. Its function is as follows. Essential for recycling GMP and indirectly, cGMP. This chain is Guanylate kinase, found in Mesomycoplasma hyopneumoniae (strain 7448) (Mycoplasma hyopneumoniae).